The sequence spans 603 residues: Thread biopolymer filament subunit gamma (603 aa).

The interval 1–191 is head; it reads MASHSSVSYR…ENETMEEELK (191 aa). The IF rod domain occupies 158-476; that stretch reads VKNILGTLNQ…KLLEGQELMV (319 aa). The tract at residues 193–227 is coil 1A; that stretch reads LTGGVPMSPDSTVNLENVETQVTEMLTEVSNLTLE. The linker 1 stretch occupies residues 228–240; it reads RVRLEIDVDHLRA. The segment at 241 to 341 is coil 1B; it reads TADEIKSKYE…DALNVMREEY (101 aa). Residues 342–362 are linker 12; it reads QQVVTKNVQEAETYCKMQIDQ. The segment at 363-381 is coil 2A; it reads IQGISTQTTEQISILDKEI. A linker 2 region spans residues 382–389; sequence NTLEKELQ. Positions 390–510 are coil 2B; the sequence is PLNVEYQRLL…SSVGYGASST (121 aa). The interval 511–603 is tail; sequence TLGAISGGYS…GHDSTIILQQ (93 aa). The span at 562-587 shows a compositional bias: low complexity; the sequence is SSSGGHSMYSSSSMKRSSSKSASASA. A disordered region spans residues 562-603; the sequence is SSSGGHSMYSSSSMKRSSSKSASASAGGYGTSGHDSTIILQQ.

It belongs to the intermediate filament family. In terms of assembly, coiled-coil heterodimer of an alpha and a gamma subunit. Assemble into 10 nm filaments. Forms a massive, conical, intermediate filament biopolymer of approximately 60 cm.

Its subcellular location is the secreted. It is found in the extracellular space. Functionally, released extracellularly into seawater and provides physical and biological defense against invasive organism by modulation of the viscoelastic properties of mucus. The protein is Thread biopolymer filament subunit gamma of Eptatretus stoutii (Pacific hagfish).